The sequence spans 222 residues: Cytidylate kinase (222 aa).

Residue G9–T17 participates in ATP binding.

It belongs to the cytidylate kinase family. Type 1 subfamily.

Its subcellular location is the cytoplasm. It catalyses the reaction CMP + ATP = CDP + ADP. The catalysed reaction is dCMP + ATP = dCDP + ADP. The protein is Cytidylate kinase of Thermosipho africanus (strain TCF52B).